The chain runs to 543 residues: Malate synthase (543 aa).

The active-site Proton acceptor is the Arg-162. The Proton donor role is filled by Asp-449.

The protein belongs to the malate synthase family.

It carries out the reaction glyoxylate + acetyl-CoA + H2O = (S)-malate + CoA + H(+). It participates in carbohydrate metabolism; glyoxylate cycle; (S)-malate from isocitrate: step 2/2. This is Malate synthase (masA) from Dictyostelium discoideum (Social amoeba).